We begin with the raw amino-acid sequence, 348 residues long: Guanosine ABC transporter permease protein NupP (348 aa).

The next 9 helical transmembrane spans lie at 8 to 28 (LLVP…IMLV), 61 to 81 (YILS…NIGV), 85 to 105 (LLVG…PAYI), 107 to 127 (LPLA…IPGI), 136 to 156 (EVIV…YIIS), 189 to 209 (LHLG…IINK), 237 to 257 (IMTS…MEGL), 277 to 297 (IAVA…ACLL), and 320 to 340 (IVIA…FVMG).

The protein belongs to the binding-protein-dependent transport system permease family. In terms of assembly, the complex is composed of two ATP-binding proteins (NupO), two transmembrane proteins (NupP and NupQ) and a solute-binding protein (NupN).

The protein localises to the cell membrane. Its function is as follows. Part of an ABC transporter complex involved in the uptake of guanosine. Responsible for the translocation of the substrate across the membrane. May be a nucleoside transporter of broad specificity but with various affinities for different substrates. The sequence is that of Guanosine ABC transporter permease protein NupP from Bacillus subtilis (strain 168).